Here is a 526-residue protein sequence, read N- to C-terminus: Bifunctional purine biosynthesis protein PurH (526 aa).

The 147-residue stretch at 1–147 folds into the MGS-like domain; it reads MSSIKRALIS…KNWKHVAIVT (147 aa).

Belongs to the PurH family.

The catalysed reaction is (6R)-10-formyltetrahydrofolate + 5-amino-1-(5-phospho-beta-D-ribosyl)imidazole-4-carboxamide = 5-formamido-1-(5-phospho-D-ribosyl)imidazole-4-carboxamide + (6S)-5,6,7,8-tetrahydrofolate. It carries out the reaction IMP + H2O = 5-formamido-1-(5-phospho-D-ribosyl)imidazole-4-carboxamide. Its pathway is purine metabolism; IMP biosynthesis via de novo pathway; 5-formamido-1-(5-phospho-D-ribosyl)imidazole-4-carboxamide from 5-amino-1-(5-phospho-D-ribosyl)imidazole-4-carboxamide (10-formyl THF route): step 1/1. The protein operates within purine metabolism; IMP biosynthesis via de novo pathway; IMP from 5-formamido-1-(5-phospho-D-ribosyl)imidazole-4-carboxamide: step 1/1. This is Bifunctional purine biosynthesis protein PurH from Neisseria meningitidis serogroup B (strain ATCC BAA-335 / MC58).